The chain runs to 198 residues: Dephospho-CoA kinase (198 aa).

Residues 2–90 (LIAIVGKPGV…KLSLVTKPLL (89 aa)) form the DPCK domain. 10 to 15 (GVGKTS) contributes to the ATP binding site.

This sequence belongs to the CoaE family.

It localises to the cytoplasm. The catalysed reaction is 3'-dephospho-CoA + ATP = ADP + CoA + H(+). Its pathway is cofactor biosynthesis; coenzyme A biosynthesis; CoA from (R)-pantothenate: step 5/5. Catalyzes the phosphorylation of the 3'-hydroxyl group of dephosphocoenzyme A to form coenzyme A. The protein is Dephospho-CoA kinase of Mycoplasma genitalium (strain ATCC 33530 / DSM 19775 / NCTC 10195 / G37) (Mycoplasmoides genitalium).